The following is a 1007-amino-acid chain: MSNKLVKEKRVDQADLAWLTDPEVYEVNTIPPHSDHESFQSQEELEEGKSSLVQSLDGDWLIDYAENGQGPVNFYAEDFDDSNFKSVKVPGNLELQGFGQPQYVNVQYPWDGSEEIFPPQIPSKNPLASYVRYFDLDEAFWDKEVSLKFDGAATAIYVWLNGHFVGYGEDSFTPSEFMVTKFLKKENNRLAVALYKYSSASWLEDQDFWRMSGLFRSVTLQAKPRLHLEDLKLTASLTDNYQKGKLEVEANIAYRLPNASFKLEVRDSEGDLVAEKLGPIRSEQLEFTLADLPVAAWSAEKPNLYQVRLYLYQAGSLLEVSRQEVGFRNFELKDGIMYLNGQRIVFKGANRHEFDSKLGRAITEEDMIWDIKTMKRSNINAVRCSHYPNQSLFYRLCDKYGLYVIDEANLESHGTWEKVGGHEDPSFNVPGDDQHWLGASLSRVKNMMARDKNHASILIWSLGNESYAGTVFAQMADYVRKADPTRVQHYEGVTHNRKFDDATQIESRMYAPAKVIEEYLTNKPAKPFISVEYAHAMGNSVGDLAAYTALEKYPHYQGGFIWDWIDQGLEKDGHLLYGGDFDDRPTDYEFCGNGLVFADRTESPKLANVKALYANLKLEVKDGQLFLKNDNLFTNSSSYYFLTSLLVDGKLTYQSRPLTFGLEPGESGTFALPWPEVADEKGEVVYRVTAHLKEDLPWADEGFTVAEAEEVAQKLPEFKPEGRPDLVDSDYNLGLKGNNFQILFSKVKGWPVSLKYAGREYLKRLPEFTFWRALTDNDRGAGYGYDLARWENAGKYARLKDISCEVKEDSVLVKTAFTLPVALKGDLTVTYEVDGRGKIAVTADFPGAEEAGLLPAFGLNLALPKELTDYRYYGLGPNESYPDRLEGNYLGIYQGAVKKNFSPYRPQETGNRSKVRWYQLFDEKGGLEFTANGADLNLSALPYSAAQIEAADHAFELTNNYTWVRALSAQMGVGGDDSWGQKVHPEFCLDAQKARQLRLVIQPLLLK.

The tract at residues 29–48 (TIPPHSDHESFQSQEELEEG) is disordered. Residue glutamate 465 is the Proton donor of the active site. The active-site Nucleophile is the glutamate 532.

This sequence belongs to the glycosyl hydrolase 2 family. As to quaternary structure, monomer.

The catalysed reaction is Hydrolysis of terminal non-reducing beta-D-galactose residues in beta-D-galactosides.. The polypeptide is Beta-galactosidase (lacZ) (Lactobacillus delbrueckii subsp. bulgaricus).